The following is a 188-amino-acid chain: Methionine aminopeptidase (188 aa).

A substrate-binding site is contributed by His60. A divalent metal cation is bound by residues Asp80, Asp91, and His164. His172 serves as a coordination point for substrate.

This sequence belongs to the peptidase M24A family. Methionine aminopeptidase archaeal type 2 subfamily. Monomer. Co(2+) is required as a cofactor. Requires Zn(2+) as cofactor. It depends on Mn(2+) as a cofactor. The cofactor is Fe(2+).

It carries out the reaction Release of N-terminal amino acids, preferentially methionine, from peptides and arylamides.. Removes the N-terminal methionine from nascent proteins. The N-terminal methionine is often cleaved when the second residue in the primary sequence is small and uncharged (Met-Ala-, Cys, Gly, Pro, Ser, Thr, or Val). This is Methionine aminopeptidase (map) from Methanothermus fervidus.